Here is a 197-residue protein sequence, read N- to C-terminus: Small ribosomal subunit protein uS4c (197 aa).

The region spanning methionine 85–asparagine 161 is the S4 RNA-binding domain.

It belongs to the universal ribosomal protein uS4 family. As to quaternary structure, part of the 30S ribosomal subunit. Contacts protein S5. The interaction surface between S4 and S5 is involved in control of translational fidelity.

It localises to the plastid. In terms of biological role, one of the primary rRNA binding proteins, it binds directly to 16S rRNA where it nucleates assembly of the body of the 30S subunit. Its function is as follows. With S5 and S12 plays an important role in translational accuracy. The sequence is that of Small ribosomal subunit protein uS4c (rps4) from Cuscuta obtusiflora (Peruvian dodder).